Here is a 310-residue protein sequence, read N- to C-terminus: MIIVTGGAGFIGSNIVKALNDKGITDILVVDNLKDGTKFVNLVDLDIADYMDKEDFLIQIMAGEEFGDVEAIFHEGACSSTTEWDGKYMMDNNYQYSKELLHYCLEREIPLLYASSAATYGGRTSDFIESREYEKPLNVYGYSKFLFDEYVRQILPEANSQIVGFRYFNVYGPREGHKGSMASVAFHLNTQLNNGESPKLFEGSENFKRDFVYVGDVADVNLWFLENGVSGIFNLGTGRAESFQAVADATLAYHKKGQIEYIPFPDKLKGRYQAFTQADLTNLRAAGYDKPFKTVAEGVTEYMAWLNRDA.

Residues 10–11 (FI), 31–32 (DN), K38, K53, 75–79 (EGACS), and N92 contribute to the NADP(+) site. Y140 serves as the catalytic Proton acceptor. Residue K144 coordinates NADP(+). N169 is a binding site for substrate. The NADP(+) site is built by V170 and K178. K178 (proton acceptor) is an active-site residue. Substrate is bound by residues S180, H187, 201-204 (FEGS), and R209. An N6-acetyllysine modification is found at K267. A substrate-binding site is contributed by Y272.

Belongs to the NAD(P)-dependent epimerase/dehydratase family. HldD subfamily. In terms of assembly, homopentamer. Requires NADP(+) as cofactor.

The catalysed reaction is ADP-D-glycero-beta-D-manno-heptose = ADP-L-glycero-beta-D-manno-heptose. It participates in nucleotide-sugar biosynthesis; ADP-L-glycero-beta-D-manno-heptose biosynthesis; ADP-L-glycero-beta-D-manno-heptose from D-glycero-beta-D-manno-heptose 7-phosphate: step 4/4. Its function is as follows. Catalyzes the interconversion between ADP-D-glycero-beta-D-manno-heptose and ADP-L-glycero-beta-D-manno-heptose via an epimerization at carbon 6 of the heptose. This chain is ADP-L-glycero-D-manno-heptose-6-epimerase, found in Escherichia coli (strain SMS-3-5 / SECEC).